A 150-amino-acid polypeptide reads, in one-letter code: SsrA-binding protein (150 aa).

Residues 129–150 (KRQTLKSKEADREMARALRDRH) are disordered.

The protein belongs to the SmpB family.

Its subcellular location is the cytoplasm. Required for rescue of stalled ribosomes mediated by trans-translation. Binds to transfer-messenger RNA (tmRNA), required for stable association of tmRNA with ribosomes. tmRNA and SmpB together mimic tRNA shape, replacing the anticodon stem-loop with SmpB. tmRNA is encoded by the ssrA gene; the 2 termini fold to resemble tRNA(Ala) and it encodes a 'tag peptide', a short internal open reading frame. During trans-translation Ala-aminoacylated tmRNA acts like a tRNA, entering the A-site of stalled ribosomes, displacing the stalled mRNA. The ribosome then switches to translate the ORF on the tmRNA; the nascent peptide is terminated with the 'tag peptide' encoded by the tmRNA and targeted for degradation. The ribosome is freed to recommence translation, which seems to be the essential function of trans-translation. The protein is SsrA-binding protein of Syntrophotalea carbinolica (strain DSM 2380 / NBRC 103641 / GraBd1) (Pelobacter carbinolicus).